A 98-amino-acid chain; its full sequence is Growth-regulated protein homolog gamma (98 aa).

Positions 1 to 29 are cleaved as a signal peptide; sequence MAPAASSAPRLLRAAMLLLLLVAAGRRAA. Intrachain disulfides connect C39–C65 and C41–C81.

It belongs to the intercrine alpha (chemokine CxC) family.

It is found in the secreted. In Bos taurus (Bovine), this protein is Growth-regulated protein homolog gamma.